The sequence spans 427 residues: DEAD-box ATP-dependent RNA helicase 56 (427 aa).

A disordered region spans residues 1-30 (MGDARDNEAYEEELLDYEEEDEKVPDSGNK). Acidic residues predominate over residues 9-23 (AYEEELLDYEEEDEK). A Q motif motif is present at residues 46 to 74 (SGFRDFLLKPELLRAIVDSGFEHPSEVQH). The region spanning 77–250 (IPQAILGMDV…KKFMQDPMEI (174 aa)) is the Helicase ATP-binding domain. Residue 90–97 (AKSGMGKT) coordinates ATP. The DECD box motif lies at 197–200 (DECD). Positions 278–423 (KLNDLLDALD…ELPEQIDTST (146 aa)) constitute a Helicase C-terminal domain.

Belongs to the DEAD box helicase family. DECD subfamily. As to quaternary structure, interacts with ALY2 and MOS11.

It localises to the nucleus. The enzyme catalyses ATP + H2O = ADP + phosphate + H(+). In terms of biological role, ATP-dependent RNA helicase involved in pre-mRNA splicing. Required for the export of mRNA out of the nucleus. In addition to ssRNA and dsRNA, binds dsDNA, but not ssDNA. The sequence is that of DEAD-box ATP-dependent RNA helicase 56 (RH56) from Arabidopsis thaliana (Mouse-ear cress).